A 255-amino-acid polypeptide reads, in one-letter code: tRNA (guanine-N(1)-)-methyltransferase (255 aa).

S-adenosyl-L-methionine-binding positions include Gly117 and Leu137–Leu142.

Belongs to the RNA methyltransferase TrmD family. Homodimer.

The protein localises to the cytoplasm. It catalyses the reaction guanosine(37) in tRNA + S-adenosyl-L-methionine = N(1)-methylguanosine(37) in tRNA + S-adenosyl-L-homocysteine + H(+). Its function is as follows. Specifically methylates guanosine-37 in various tRNAs. The sequence is that of tRNA (guanine-N(1)-)-methyltransferase from Paraburkholderia phytofirmans (strain DSM 17436 / LMG 22146 / PsJN) (Burkholderia phytofirmans).